The following is a 159-amino-acid chain: Putative pre-16S rRNA nuclease (159 aa).

Belongs to the YqgF nuclease family.

The protein resides in the cytoplasm. In terms of biological role, could be a nuclease involved in processing of the 5'-end of pre-16S rRNA. This Agrobacterium fabrum (strain C58 / ATCC 33970) (Agrobacterium tumefaciens (strain C58)) protein is Putative pre-16S rRNA nuclease.